A 339-amino-acid chain; its full sequence is Glycerol-3-phosphate dehydrogenase [NAD(P)+] (339 aa).

NADPH contacts are provided by Ser-31, Trp-32, Arg-52, and Lys-122. Sn-glycerol 3-phosphate-binding residues include Lys-122 and Gly-152. NADPH is bound at residue Ala-156. Residues Lys-207, Asp-260, Ser-270, Arg-271, and Asn-272 each contribute to the sn-glycerol 3-phosphate site. Lys-207 functions as the Proton acceptor in the catalytic mechanism. NADPH is bound at residue Arg-271. Position 293 (Glu-293) interacts with NADPH.

It belongs to the NAD-dependent glycerol-3-phosphate dehydrogenase family.

It localises to the cytoplasm. It catalyses the reaction sn-glycerol 3-phosphate + NAD(+) = dihydroxyacetone phosphate + NADH + H(+). The enzyme catalyses sn-glycerol 3-phosphate + NADP(+) = dihydroxyacetone phosphate + NADPH + H(+). It participates in membrane lipid metabolism; glycerophospholipid metabolism. Catalyzes the reduction of the glycolytic intermediate dihydroxyacetone phosphate (DHAP) to sn-glycerol 3-phosphate (G3P), the key precursor for phospholipid synthesis. The sequence is that of Glycerol-3-phosphate dehydrogenase [NAD(P)+] from Tropheryma whipplei (strain Twist) (Whipple's bacillus).